The chain runs to 118 residues: UPF0102 protein lpp3065 (118 aa).

The protein belongs to the UPF0102 family.

The sequence is that of UPF0102 protein lpp3065 from Legionella pneumophila (strain Paris).